The following is a 100-amino-acid chain: uncharacterized protein (100 aa).

An HTH arsR-type domain is found at 1-100 (MEPIEVFKAL…KLADFLKTEI (100 aa)). A DNA-binding region (H-T-H motif) is located at residues 44–67 (VSQITDKLKMTQSTASQYLTILLR).

This is an uncharacterized protein from Bacillus subtilis (strain 168).